The following is a 113-amino-acid chain: Small ribosomal subunit protein bS18 (113 aa).

The disordered stretch occupies residues 1 to 41; sequence MSEEKIVNTEAAPEAVAERPARAERSERPERPAKGPFGKKR. The segment covering 16-33 has biased composition (basic and acidic residues); that stretch reads VAERPARAERSERPERPA.

It belongs to the bacterial ribosomal protein bS18 family. In terms of assembly, part of the 30S ribosomal subunit. Forms a tight heterodimer with protein bS6.

Functionally, binds as a heterodimer with protein bS6 to the central domain of the 16S rRNA, where it helps stabilize the platform of the 30S subunit. The sequence is that of Small ribosomal subunit protein bS18 from Elusimicrobium minutum (strain Pei191).